We begin with the raw amino-acid sequence, 198 residues long: Carnitine operon protein CaiE (198 aa).

The segment at 179 to 198 (VEENRPRLKGTTDVKPKSAQ) is disordered. The segment covering 180 to 198 (EENRPRLKGTTDVKPKSAQ) has biased composition (basic and acidic residues).

Belongs to the transferase hexapeptide repeat family.

It participates in amine and polyamine metabolism; carnitine metabolism. Its function is as follows. Overproduction of CaiE stimulates the activity of CaiB and CaiD. In Salmonella choleraesuis (strain SC-B67), this protein is Carnitine operon protein CaiE.